A 254-amino-acid chain; its full sequence is 3-oxo-5-alpha-steroid 4-dehydrogenase 2 (254 aa).

Transmembrane regions (helical) follow at residues 8-28 (VPVL…LCFG), 72-92 (PRSL…AHYF), 146-166 (FSVG…SDCM), and 206-226 (LATW…FLGM).

Belongs to the steroid 5-alpha reductase family.

The protein localises to the microsome membrane. Its subcellular location is the endoplasmic reticulum membrane. The enzyme catalyses a 3-oxo-5alpha-steroid + NADP(+) = a 3-oxo-Delta(4)-steroid + NADPH + H(+). The catalysed reaction is 17beta-hydroxy-5alpha-androstan-3-one + NADP(+) = testosterone + NADPH + H(+). It carries out the reaction 5alpha-pregnane-3,20-dione + NADP(+) = progesterone + NADPH + H(+). Functionally, converts testosterone (T) into 5-alpha-dihydrotestosterone (DHT) and progesterone or corticosterone into their corresponding 5-alpha-3-oxosteroids. It plays a central role in sexual differentiation and androgen physiology. This Mus musculus (Mouse) protein is 3-oxo-5-alpha-steroid 4-dehydrogenase 2 (Srd5a2).